We begin with the raw amino-acid sequence, 489 residues long: Cytochrome P450 2C41 (489 aa).

Cys-434 contributes to the heme binding site.

It belongs to the cytochrome P450 family. Requires heme as cofactor.

It localises to the endoplasmic reticulum membrane. The protein localises to the microsome membrane. The catalysed reaction is an organic molecule + reduced [NADPH--hemoprotein reductase] + O2 = an alcohol + oxidized [NADPH--hemoprotein reductase] + H2O + H(+). In terms of biological role, cytochromes P450 are a group of heme-thiolate monooxygenases. In liver microsomes, this enzyme is involved in an NADPH-dependent electron transport pathway. It oxidizes a variety of structurally unrelated compounds, including steroids, fatty acids, and xenobiotics. This Canis lupus familiaris (Dog) protein is Cytochrome P450 2C41 (CYP2C41).